Consider the following 524-residue polypeptide: Probable serine/threonine-protein kinase WNK10 (524 aa).

Positions 16-273 constitute a Protein kinase domain; sequence IRYNDVLGRG…ALELLKDQLL (258 aa). ATP-binding positions include 96 to 99 and Lys146; that span reads TELF. Catalysis depends on Asp163, which acts as the Proton acceptor. The residue at position 477 (Ser477) is a Phosphoserine. Residues 480–523 adopt a coiled-coil conformation; sequence SNKQSEDLKTELNVIESQYNQSCQRLLRMKEEAIEKAKRKWMKL.

It belongs to the protein kinase superfamily. Ser/Thr protein kinase family. WNK subfamily.

The catalysed reaction is L-seryl-[protein] + ATP = O-phospho-L-seryl-[protein] + ADP + H(+). The enzyme catalyses L-threonyl-[protein] + ATP = O-phospho-L-threonyl-[protein] + ADP + H(+). May regulate flowering time by modulating the photoperiod pathway. The polypeptide is Probable serine/threonine-protein kinase WNK10 (WNK10) (Arabidopsis thaliana (Mouse-ear cress)).